Reading from the N-terminus, the 215-residue chain is Large ribosomal subunit protein mL43 (215 aa).

It belongs to the mitochondrion-specific ribosomal protein mL43 family. As to quaternary structure, component of the mitochondrial large ribosomal subunit (mt-LSU). Mature mammalian 55S mitochondrial ribosomes consist of a small (28S) and a large (39S) subunit. The 28S small subunit contains a 12S ribosomal RNA (12S mt-rRNA) and 30 different proteins. The 39S large subunit contains a 16S rRNA (16S mt-rRNA), a copy of mitochondrial valine transfer RNA (mt-tRNA(Val)), which plays an integral structural role, and 52 different proteins. As to expression, high relative levels in skeletal muscle and testis. Lower levels of expression in the heart, brain, placenta, lung, liver, kidney, pancreas, spleen, thymus, prostate, ovary, small intestine, colon and leukocytes. Expression is coregulated with TWNK.

It localises to the mitochondrion. The polypeptide is Large ribosomal subunit protein mL43 (MRPL43) (Homo sapiens (Human)).